The primary structure comprises 650 residues: Cytosolic Fe-S cluster assembly factor NAR1 (650 aa).

C22, C81, C84, C87, C215, C270, C480, and C484 together coordinate [4Fe-4S] cluster.

Belongs to the NARF family.

Functionally, component of the cytosolic Fe/S protein assembly machinery. Required for maturation of extramitochondrial Fe/S proteins. May play a role in the transfer of pre-assembled Fe/S clusters to target apoproteins. This is Cytosolic Fe-S cluster assembly factor NAR1 (NAR1) from Cryptococcus neoformans var. neoformans serotype D (strain JEC21 / ATCC MYA-565) (Filobasidiella neoformans).